We begin with the raw amino-acid sequence, 442 residues long: Probable folate-biopterin transporter 7 (442 aa).

Helical transmembrane passes span 23 to 43 (LGFG…ANFF), 64 to 82 (LPMV…VYFF), 87 to 107 (IPYI…IAFL), 114 to 134 (ILAL…VEVA), 158 to 178 (FVWM…GIAI), 184 to 204 (QSTF…TINI), 241 to 261 (IAWI…MFFY), 270 to 290 (ASLL…WGFA), 302 to 322 (KLLT…LLFV), 335 to 355 (VYVL…ILPF), 379 to 399 (IALA…FVGV), and 410 to 430 (GLAI…WIYD).

It belongs to the major facilitator superfamily. Folate-biopterin transporter (TC 2.A.71) family.

The protein resides in the membrane. In terms of biological role, could mediate folate transport. The protein is Probable folate-biopterin transporter 7 of Arabidopsis thaliana (Mouse-ear cress).